A 473-amino-acid polypeptide reads, in one-letter code: Probable acid phosphatase DDB_G0284755 (473 aa).

His-94 serves as the catalytic Nucleophile. Asp-359 acts as the Proton donor in catalysis.

It belongs to the histidine acid phosphatase family.

The enzyme catalyses a phosphate monoester + H2O = an alcohol + phosphate. This is Probable acid phosphatase DDB_G0284755 from Dictyostelium discoideum (Social amoeba).